A 182-amino-acid polypeptide reads, in one-letter code: Transmembrane protein 11 homolog, mitochondrial (182 aa).

A Phosphoserine modification is found at Ser-25. The next 2 membrane-spanning stretches (helical) occupy residues 70 to 89 (TAVA…RDRP) and 91 to 108 (IAAP…LYTV).

It belongs to the TMEM11 family.

The protein resides in the mitochondrion inner membrane. In terms of biological role, plays a role in mitochondrial morphogenesis. The polypeptide is Transmembrane protein 11 homolog, mitochondrial (Pmi) (Drosophila melanogaster (Fruit fly)).